A 91-amino-acid polypeptide reads, in one-letter code: Small ribosomal subunit protein uS17 (91 aa).

The protein belongs to the universal ribosomal protein uS17 family. As to quaternary structure, part of the 30S ribosomal subunit.

Its function is as follows. One of the primary rRNA binding proteins, it binds specifically to the 5'-end of 16S ribosomal RNA. This chain is Small ribosomal subunit protein uS17, found in Salinispora arenicola (strain CNS-205).